The primary structure comprises 317 residues: Transaldolase (317 aa).

Catalysis depends on Lys125, which acts as the Schiff-base intermediate with substrate.

The protein belongs to the transaldolase family. Type 1 subfamily. As to quaternary structure, homodimer.

It is found in the cytoplasm. It catalyses the reaction D-sedoheptulose 7-phosphate + D-glyceraldehyde 3-phosphate = D-erythrose 4-phosphate + beta-D-fructose 6-phosphate. Its pathway is carbohydrate degradation; pentose phosphate pathway; D-glyceraldehyde 3-phosphate and beta-D-fructose 6-phosphate from D-ribose 5-phosphate and D-xylulose 5-phosphate (non-oxidative stage): step 2/3. Its function is as follows. Transaldolase is important for the balance of metabolites in the pentose-phosphate pathway. The chain is Transaldolase from Delftia acidovorans (strain DSM 14801 / SPH-1).